The sequence spans 302 residues: Ornithine carbamoyltransferase (302 aa).

Carbamoyl phosphate-binding positions include Ser-52–Thr-55, Gln-79, Arg-103, and His-130–Gln-133. L-ornithine-binding positions include Asn-161, Asp-221, and Ser-225–Met-226. Carbamoyl phosphate contacts are provided by residues Cys-261–Leu-262 and Arg-289.

This sequence belongs to the aspartate/ornithine carbamoyltransferase superfamily. OTCase family.

Its subcellular location is the cytoplasm. The catalysed reaction is carbamoyl phosphate + L-ornithine = L-citrulline + phosphate + H(+). Its pathway is amino-acid biosynthesis; L-arginine biosynthesis; L-arginine from L-ornithine and carbamoyl phosphate: step 1/3. Functionally, reversibly catalyzes the transfer of the carbamoyl group from carbamoyl phosphate (CP) to the N(epsilon) atom of ornithine (ORN) to produce L-citrulline. The protein is Ornithine carbamoyltransferase of Syntrophotalea carbinolica (strain DSM 2380 / NBRC 103641 / GraBd1) (Pelobacter carbinolicus).